Consider the following 103-residue polypeptide: Iron-sulfur cluster assembly protein CyaY (103 aa).

The protein belongs to the frataxin family.

In terms of biological role, involved in iron-sulfur (Fe-S) cluster assembly. May act as a regulator of Fe-S biogenesis. This Rickettsia rickettsii (strain Iowa) protein is Iron-sulfur cluster assembly protein CyaY.